We begin with the raw amino-acid sequence, 96 residues long: Toxin ParE1 (96 aa).

Belongs to the RelE toxin family. In terms of assembly, forms a ParD1(2)-ParE1(2) heterotetramer.

Its function is as follows. Toxic component of a type II toxin-antitoxin (TA) system. Its toxic effect is neutralized by coexpression with cognate antitoxin ParD1 but no other ParD or RelB antitoxin. Low levels of wild-type toxin in the absence of antitoxin decreases the rate of cell growth, and results in death or loss of colony formation abilities and greatly elongated cells. Low levels of a mutant missing the last 4 residues leads to loss of cell division while cell elongation continues. This chain is Toxin ParE1 (parE1), found in Caulobacter vibrioides (strain ATCC 19089 / CIP 103742 / CB 15) (Caulobacter crescentus).